The following is a 277-amino-acid chain: MPLTPTATRELLAQLGHQPKRFLGQNFLVDGNIVRKSLELAQVRRGDAVVEIGPGLGTLTGALLEAGAEVWAVEKDRTLHAHLSSTLQPRHPDTFHLLEADAVEHPLADLPAAHAAAFKIVANLPYAIATPWLDAVLGGPLPERMVLMLQQEAAQRYVAMPGSKSFGAISVFLQSAYEVAPGHRVEASCFFPRPDVDSYLLHLVRRAEPFVFTPEVKALIRSVFQQRRKQIGGLLRDRLPDHGASWLARLTAAGLSSLTRPEAIPTELWRALQVRES.

Asparagine 26, leucine 28, glycine 53, glutamate 74, aspartate 101, and asparagine 123 together coordinate S-adenosyl-L-methionine.

Belongs to the class I-like SAM-binding methyltransferase superfamily. rRNA adenine N(6)-methyltransferase family. RsmA subfamily.

Its subcellular location is the cytoplasm. The enzyme catalyses adenosine(1518)/adenosine(1519) in 16S rRNA + 4 S-adenosyl-L-methionine = N(6)-dimethyladenosine(1518)/N(6)-dimethyladenosine(1519) in 16S rRNA + 4 S-adenosyl-L-homocysteine + 4 H(+). Specifically dimethylates two adjacent adenosines (A1518 and A1519) in the loop of a conserved hairpin near the 3'-end of 16S rRNA in the 30S particle. May play a critical role in biogenesis of 30S subunits. The chain is Ribosomal RNA small subunit methyltransferase A from Opitutus terrae (strain DSM 11246 / JCM 15787 / PB90-1).